Here is a 69-residue protein sequence, read N- to C-terminus: U5-agatoxin-Ao1a (69 aa).

An N-terminal signal peptide occupies residues 1-20 (MRTIISLLLLSAMVFAVIEA). Residues 21-34 (ISLEEGLQLFEGER) constitute a propeptide that is removed on maturation. 2 disulfides stabilise this stretch: C36/C52 and C43/C57.

This sequence belongs to the neurotoxin 01 (U2-agtx) family. Post-translationally, does not contain a cysteine at position 61 which disrupts the cysteine framework. Expressed by the venom gland.

Its subcellular location is the secreted. The chain is U5-agatoxin-Ao1a from Agelena orientalis (Funnel-web spider).